The primary structure comprises 299 residues: Ribosomal protein L11 methyltransferase (299 aa).

Residues Thr139, Gly166, Asp188, and Asn231 each contribute to the S-adenosyl-L-methionine site.

It belongs to the methyltransferase superfamily. PrmA family.

Its subcellular location is the cytoplasm. The catalysed reaction is L-lysyl-[protein] + 3 S-adenosyl-L-methionine = N(6),N(6),N(6)-trimethyl-L-lysyl-[protein] + 3 S-adenosyl-L-homocysteine + 3 H(+). Its function is as follows. Methylates ribosomal protein L11. The chain is Ribosomal protein L11 methyltransferase from Thermosynechococcus vestitus (strain NIES-2133 / IAM M-273 / BP-1).